A 287-amino-acid polypeptide reads, in one-letter code: UPF0276 protein ACIAD0933 (287 aa).

It belongs to the UPF0276 family.

The polypeptide is UPF0276 protein ACIAD0933 (Acinetobacter baylyi (strain ATCC 33305 / BD413 / ADP1)).